Consider the following 1593-residue polypeptide: MNKVYNTVWNESTGMWVVTSELTRKGGRRPRQIRRTALAGLIAGLLLPSAPALAVDYNNETLGSGATSSSMSLNAGDTATDTTINSGGSQRVSSGGSATSTTINSGGFQYVSSGGSATDTTINSGGYQHVSSGGSATDTTINSGGYLSVSGGGTAVDITQNSGGVIDTNTYATLSGTNINGSFSIVNGSASNMLLENGGFLSVLNGHQATNTTINSGGYLSVYGDGSAVDITQNSGGAISTDTSATLSGTNINGSFSIAGGSASNMLLENRGQLNVNSGHQATNTIINSGGNQHISGGGSATDTTINSAGFQYVYSGGSATSTTINRGGNQYVSGGSATNTTINSGGYLSVYGGGTAVDITQNSGGAIDTNTYATLSGTNINGSFSIAGGSASNMLLENGGYLNVNSGHQATNTTINSGGGLRVSGGGTAVDITQNSGGAISADTSATLSGTNINGSFSIANGSASNMLLENGGSLYVNSGHQATNTTINSGGGLRVSGGGTAVDITQNSGGAIDTNTYATLSGTNINGSFSIANGSASNMLLENGGYLYVDGGHQATNTTINSGGILSVSGGGTAVDITQNSGGVIDTNTYATLSGTNINGSFSIANGSASNMLLENGGFLYVNSGHQAMNTTINNSRSTMNVLGGGSATSTTINSGGYQYVSSGGSATSTTINSGGNQYVSSGGSATDTTINSGGSLVVFDGTAVDITQNSGGAITADTSATLSGTNINGSFSIANGSASNMLLERGSLYVEGGHQATNTTINGGGSMDVSTDGSATNTTINDGGQMYVSTDGSVTSTIVNIGGFVNLLGGSATDTTLNEGGRMLVNPQGSATGTIINRGGYQEILRSAGAANTIINGGQQSVLSGGSATDTTLNSGGAQYINNGGSATDTTLNSGGAQYINNGGSVTNTTINSGGGQYVYINGNVTKTTITDGGILQVDAGGSASQVTQNSGGAIVTNTSAVLSGTNDKGTFSIAGGSASNMSLENGGLLTVLVGHDASDTTVGSDGTLSVQSGGVLRGTTTLTDNGTLVGNMVTNEGNLYFLNNSAATFAGTLTGTGTLTQEGGNTRFSGLLSQDGGITLHSGAAMTMVTLQANANVTTQSGTSLTLDNGSILTGNVTGDNTGAGDMTVKGASVWHLDGDATVGALTLDNGTVDFRPSATTRLTQAFRPVSLVSESLSGNGTFRMNTDIASHTGDMLNVTGNANGNFVLDIRNTGLEPVSAGTPLQVVHTGSGDAAFSLNGGKVDAGTWEYYLNKENTDWYLKADSSQPGTDNPGTDNPVPPVRHTTKSADAVLDMATAPVYVFNSELQSLRFRHGDVMQNTRSPGGVWGRYTGSDTRISGGAGSGYSLTQSGMETGGDTVFDLNESRLAVGAFVSYSDNSISHNRGGSSTVGSTGGGLYATWFNNDGYYVDGVIKVNRFRNELRTWMSDGTAVKGDYHQNGFGGSLEAGRTFSLNENTWIQPYLRSTAFRAESKDISLDNGMKAKAGTTKSLQGEVGVNLGMNLDVAGTVVRPYLTTAVSHEFSDNNRVRINDSYNFTNDISGTTGKYGAGVSAQLTANAGVWAEASYQNGENTESPVTGSVGFRINF.

An N-terminal signal peptide occupies residues 1–54 (MNKVYNTVWNESTGMWVVTSELTRKGGRRPRQIRRTALAGLIAGLLLPSAPALA). The segment covering 65 to 85 (GATSSSMSLNAGDTATDTTIN) has biased composition (polar residues). Disordered stretches follow at residues 65 to 100 (GATSSSMSLNAGDTATDTTINSGGSQRVSSGGSATS) and 1267 to 1286 (KADSSQPGTDNPGTDNPVPP). Over residues 86–97 (SGGSQRVSSGGS) the composition is skewed to low complexity. The span at 1269-1280 (DSSQPGTDNPGT) shows a compositional bias: polar residues. One can recognise an Autotransporter domain in the interval 1325-1593 (NTRSPGGVWG…TGSVGFRINF (269 aa)).

Post-translationally, glycosylated by heptosyltransferas BAHTCr. Glycosylation is required for adhesion to mammalian cells and colonization of the mouse host gastrointestinal tract.

The protein localises to the cell outer membrane. Functionally, autotransporter required for the colonization of the mouse host gastrointestinal tract, possibly by mediating bacteria adhesion to host cells. The protein is Autotransporter CRAC of Citrobacter rodentium (strain ICC168) (Citrobacter freundii biotype 4280).